The following is a 408-amino-acid chain: Arginine biosynthesis bifunctional protein ArgJ (408 aa).

Thr158, Lys184, Thr195, Glu281, Asn403, and Thr408 together coordinate substrate. Thr195 functions as the Nucleophile in the catalytic mechanism.

It belongs to the ArgJ family. In terms of assembly, heterotetramer of two alpha and two beta chains.

It localises to the cytoplasm. It carries out the reaction N(2)-acetyl-L-ornithine + L-glutamate = N-acetyl-L-glutamate + L-ornithine. The catalysed reaction is L-glutamate + acetyl-CoA = N-acetyl-L-glutamate + CoA + H(+). The protein operates within amino-acid biosynthesis; L-arginine biosynthesis; L-ornithine and N-acetyl-L-glutamate from L-glutamate and N(2)-acetyl-L-ornithine (cyclic): step 1/1. It participates in amino-acid biosynthesis; L-arginine biosynthesis; N(2)-acetyl-L-ornithine from L-glutamate: step 1/4. Functionally, catalyzes two activities which are involved in the cyclic version of arginine biosynthesis: the synthesis of N-acetylglutamate from glutamate and acetyl-CoA as the acetyl donor, and of ornithine by transacetylation between N(2)-acetylornithine and glutamate. This chain is Arginine biosynthesis bifunctional protein ArgJ, found in Bacillus cereus (strain ATCC 14579 / DSM 31 / CCUG 7414 / JCM 2152 / NBRC 15305 / NCIMB 9373 / NCTC 2599 / NRRL B-3711).